The chain runs to 383 residues: Xylose/arabinose import ATP-binding protein XacK (383 aa).

An ABC transporter domain is found at 4 to 240 (LTLDDVTKVY…PNNLFVAGFI (237 aa)). Residue 41-48 (GPSGCGKS) participates in ATP binding.

It belongs to the ABC transporter superfamily. Carbohydrate uptake transporter-1 (CUT1) (TC 3.A.1.1) family. As to quaternary structure, the complex is composed of two ATP-binding proteins (XacJ and XacK), two transmembrane proteins (XacH and XacI) and a solute-binding protein (XacG).

The protein localises to the cell membrane. The enzyme catalyses D-xylose(out) + ATP + H2O = D-xylose(in) + ADP + phosphate + H(+). It catalyses the reaction L-arabinose(out) + ATP + H2O = L-arabinose(in) + ADP + phosphate + H(+). Part of the ABC transporter complex XacGHIJK involved in the uptake of xylose and arabinose. Responsible for energy coupling to the transport system. The polypeptide is Xylose/arabinose import ATP-binding protein XacK (Haloferax volcanii (strain ATCC 29605 / DSM 3757 / JCM 8879 / NBRC 14742 / NCIMB 2012 / VKM B-1768 / DS2) (Halobacterium volcanii)).